A 259-amino-acid polypeptide reads, in one-letter code: VLIRVLANLLLLQLSYAQESSELVIGGDECDINEHPFLVALHTARSKRFHCAGTLLNKEWVLTAARCDRKNIRIKFGVHNKNVQNEDEEMRVPKEKHFCVSSKTYTRWDKDIMLIRLKRPVNDGTHIAPLSLPSNPPSVGSVCRIMGWGSITTTKVTYPDVPHCANIKLFDYSVCRDAYKGLPEKSRTLCAGILEGGIDSCKVDNGGPLICNGQFQGIGSWEGHPCAQPLKPALYTNVFEYTDWIEGIIARNTTVTCPP.

Positions 1–17 are cleaved as a signal peptide; sequence VLIRVLANLLLLQLSYA. A propeptide spanning residues 18-23 is cleaved from the precursor; sequence QESSEL. Residues 24-250 enclose the Peptidase S1 domain; that stretch reads VIGGDECDIN…YTDWIEGIIA (227 aa). Intrachain disulfides connect Cys30–Cys164, Cys51–Cys67, Cys99–Cys257, Cys143–Cys211, Cys175–Cys190, and Cys201–Cys226. An N-linked (GlcNAc...) asparagine glycan is attached at Asn252.

This sequence belongs to the peptidase S1 family. Snake venom subfamily. In terms of tissue distribution, expressed by the venom gland.

It is found in the secreted. Its function is as follows. Snake venom serine protease homolog that may act in the hemostasis system of the prey. This chain is Snake venom serine protease homolog rhinocerase 2, found in Bitis rhinoceros (West African gaboon viper).